The following is a 371-amino-acid chain: Serine/threonine-protein kinase 17B (371 aa).

The Protein kinase domain occupies 33–293 (TLTPKELGRG…AESCLSHSWL (261 aa)). Residues 39–47 (LGRGKFAVV) and lysine 62 contribute to the ATP site. The active-site Proton acceptor is aspartate 158. The segment at 308-345 (SESSQTQDLSLRSSEDKTPKSCNGSCGDREDKENIPED) is disordered. Over residues 309–319 (ESSQTQDLSLR) the composition is skewed to polar residues.

It belongs to the protein kinase superfamily. CAMK Ser/Thr protein kinase family. DAP kinase subfamily. In terms of assembly, interacts with CHP1; the interaction induces CHP1 to translocate from the Golgi to the nucleus. Autophosphorylated. Highly expressed in thymus, spleen, and testis, lower levels present in the brain.

Its subcellular location is the nucleus. It is found in the cell membrane. The protein resides in the endoplasmic reticulum-Golgi intermediate compartment. The catalysed reaction is L-seryl-[protein] + ATP = O-phospho-L-seryl-[protein] + ADP + H(+). It catalyses the reaction L-threonyl-[protein] + ATP = O-phospho-L-threonyl-[protein] + ADP + H(+). Functionally, acts as a positive regulator of apoptosis. Phosphorylates myosin light chains. The protein is Serine/threonine-protein kinase 17B (Stk17b) of Rattus norvegicus (Rat).